Here is a 391-residue protein sequence, read N- to C-terminus: Isochorismate synthase EntC (391 aa).

The Mg(2+) site is built by threonine 140, threonine 142, valine 145, and aspartate 146. Residue lysine 147 is the Proton acceptor of the active site. Catalysis depends on glutamate 197, which acts as the Proton donor. The isochorismate site is built by glycine 214, serine 215, glutamate 241, alanine 303, arginine 347, and glycine 361. Residue glutamate 241 coordinates Mg(2+). Glutamate 376 is a Mg(2+) binding site. Isochorismate is bound at residue lysine 380.

This sequence belongs to the isochorismate synthase family. As to quaternary structure, monomer. Forms a specific pairwise interaction with EntB; this interaction likely facilitates substrate channeling to connect the EntB and EntC active sites. Mg(2+) serves as cofactor.

It carries out the reaction chorismate = isochorismate. Its pathway is siderophore biosynthesis; enterobactin biosynthesis. Functionally, involved in the biosynthesis of the siderophore enterobactin (macrocyclic trimeric lactone of N-(2,3-dihydroxybenzoyl)-serine). Catalyzes the reversible conversion of chorismate to isochorismate. This is Isochorismate synthase EntC from Escherichia coli O157:H7.